We begin with the raw amino-acid sequence, 222 residues long: 26S proteasome non-ATPase regulatory subunit 9 (222 aa).

The PDZ domain occupies 108–194; that stretch reads QARDMAEARE…KPLNVTVIRR (87 aa). Serine 128 bears the Phosphoserine mark.

Belongs to the proteasome subunit p27 family. Interacts with PSMC3. Part of a transient complex (modulator) containing PSMD9, PSMC6 and PSMC3 formed during the assembly of the 26S proteasome.

Functionally, acts as a chaperone during the assembly of the 26S proteasome, specifically of the base subcomplex of the PA700/19S regulatory complex (RC). During the base subcomplex assembly is part of an intermediate PSMD9:PSMC6:PSMC3 module, also known as modulator trimer complex; PSMD9 is released during the further base assembly process. The chain is 26S proteasome non-ATPase regulatory subunit 9 (Psmd9) from Mus musculus (Mouse).